The sequence spans 419 residues: Sphingomyelin phosphodiesterase 2 (419 aa).

Glutamate 49 serves as a coordination point for Mg(2+). Histidine 272 functions as the Proton acceptor in the catalytic mechanism. Helical transmembrane passes span 326-346 and 354-374; these read FSGY…VLAA and AIIL…VYLF.

It belongs to the neutral sphingomyelinase family. It depends on Mg(2+) as a cofactor. As to expression, although widely expressed in all tissues examined, except the spleen, high enzymatic activity occurs only in the brain.

The protein resides in the cell membrane. It catalyses the reaction a sphingomyelin + H2O = phosphocholine + an N-acylsphing-4-enine + H(+). The catalysed reaction is an N-(acyl)-sphingosylphosphocholine + H2O = an N-acyl-sphingoid base + phosphocholine + H(+). The enzyme catalyses 1-O-octadecyl-sn-glycero-3-phosphocholine + H2O = 1-O-octadecyl-sn-glycerol + phosphocholine + H(+). It carries out the reaction 1-hexadecanoyl-sn-glycero-3-phosphocholine + H2O = 1-hexadecanoyl-sn-glycerol + phosphocholine + H(+). It catalyses the reaction a sphingosylphosphocholine + H2O = a sphingoid base + phosphocholine + H(+). The catalysed reaction is 1-O-hexadecyl-sn-glycero-3-phosphocholine + H2O = 1-O-hexadecyl-sn-glycerol + phosphocholine + H(+). It functions in the pathway lipid metabolism; sphingolipid metabolism. With respect to regulation, activated by arachidonic acid. Functionally, catalyzes, at least in vitro, the hydrolysis of sphingomyelin to form ceramide and phosphocholine. Also hydrolyzes 1-O-alkyl-2-lyso-sn-glycero-3-phosphocholine (lyso-platelet-activating factor) in vivo. Also acts on 1-acyl-2-lyso-sn-glycero-3-phosphocholine (lyso-PC) and sphingosylphosphocholine. In Mus musculus (Mouse), this protein is Sphingomyelin phosphodiesterase 2.